A 22-amino-acid polypeptide reads, in one-letter code: Brain peptide MVPVPVHHMADELLRNGPDTVI (22 aa).

This chain is Brain peptide MVPVPVHHMADELLRNGPDTVI, found in Apis mellifera (Honeybee).